The primary structure comprises 350 residues: Spermidine/putrescine import ATP-binding protein PotA (350 aa).

The 231-residue stretch at 6–236 (LELRNVTKDY…PENLWVAKFI (231 aa)) folds into the ABC transporter domain. An ATP-binding site is contributed by 38-45 (GPSGCGKT).

This sequence belongs to the ABC transporter superfamily. Spermidine/putrescine importer (TC 3.A.1.11.1) family. As to quaternary structure, the complex is composed of two ATP-binding proteins (PotA), two transmembrane proteins (PotB and PotC) and a solute-binding protein (PotD).

It is found in the cell membrane. It carries out the reaction ATP + H2O + polyamine-[polyamine-binding protein]Side 1 = ADP + phosphate + polyamineSide 2 + [polyamine-binding protein]Side 1.. Its function is as follows. Part of the ABC transporter complex PotABCD involved in spermidine/putrescine import. Responsible for energy coupling to the transport system. The protein is Spermidine/putrescine import ATP-binding protein PotA of Mesoplasma florum (strain ATCC 33453 / NBRC 100688 / NCTC 11704 / L1) (Acholeplasma florum).